Reading from the N-terminus, the 100-residue chain is Pancreatic polypeptide prohormone (100 aa).

The N-terminal stretch at 1-29 (MAVAYCCLSLFLVSTWVALLLQPLQGTWG) is a signal peptide. Tyr-65 bears the Tyrosine amide mark.

It belongs to the NPY family. Post-translationally, no icosapeptide-like peptide is cleaved from the C-terminal.

It localises to the secreted. Hormone secreted by pancreatic cells that acts as a regulator of pancreatic and gastrointestinal functions probably by signaling through the G protein-coupled receptor NPY4R2. The sequence is that of Pancreatic polypeptide prohormone (Ppy) from Mus musculus (Mouse).